A 342-amino-acid chain; its full sequence is Sorting nexin-15 (342 aa).

Residues 1-130 (MSRQAKDDFL…EFFRGGEVTR (130 aa)) enclose the PX domain. Arginine 51, serine 53, arginine 87, and arginine 96 together coordinate a 1,2-diacyl-sn-glycero-3-phospho-(1D-myo-inositol-3-phosphate). Residue arginine 105 is modified to Omega-N-methylarginine. A phosphoserine mark is found at serine 201 and serine 227. The interval 245–267 (DQEPWEPGGQEEEEDGEGGPTPA) is disordered. In terms of domain architecture, MIT spans 265-342 (TPAYLSQATE…LRLHLSQLPP (78 aa)).

Belongs to the sorting nexin family. As to quaternary structure, homodimer. Interacts with SNX1, SNX2 and SNX4. As to expression, widely expressed.

The protein localises to the cytoplasm. Its subcellular location is the membrane. It localises to the cytoplasmic vesicle membrane. Its function is as follows. May be involved in several stages of intracellular trafficking. Overexpression of SNX15 disrupts the normal trafficking of proteins from the plasma membrane to recycling endosomes or the TGN. In Homo sapiens (Human), this protein is Sorting nexin-15 (SNX15).